Reading from the N-terminus, the 233-residue chain is MSCNQQKECCKKECQEKECCKECCCPRIKAFKKFINTFEKAQIGKEAPEFKAPAYCPCGSIKEIDINEYRGKYVVLLFYPLDWTFVCPTEMIGYSELAGQLKEINCEVIGVSVDSVYCHQAWCEADKSKGGVGKLTFPLVSDIKRCISIKYGMLNVEAGIARRGYVIIDDKGKVRYIQMNDDGIGRSTEETIRIVKAIQFSDEHGAVCPLNWKPGKDTIEPTPDGIKKYLTAH.

A Thioredoxin domain is found at 41 to 200; sequence AQIGKEAPEF…TIRIVKAIQF (160 aa). C87 acts as the Cysteine sulfenic acid (-SOH) intermediate in catalysis.

Belongs to the peroxiredoxin family. AhpC/Prx1 subfamily. Homodimer; disulfide-linked, upon oxidation.

Its subcellular location is the cell membrane. The catalysed reaction is a hydroperoxide + [thioredoxin]-dithiol = an alcohol + [thioredoxin]-disulfide + H2O. In terms of biological role, thiol-specific peroxidase that catalyzes the reduction of hydrogen peroxide and organic hydroperoxides to water and alcohols, respectively. Plays a role in cell protection against oxidative stress by detoxifying peroxides and as sensor of hydrogen peroxide-mediated signaling events. The polypeptide is Putative peroxiredoxin (Entamoeba histolytica (strain ATCC 30459 / HM-1:IMSS / ABRM)).